The sequence spans 74 residues: UPF0346 protein RBAM_019500 (74 aa).

The protein belongs to the UPF0346 family.

This Bacillus velezensis (strain DSM 23117 / BGSC 10A6 / LMG 26770 / FZB42) (Bacillus amyloliquefaciens subsp. plantarum) protein is UPF0346 protein RBAM_019500.